We begin with the raw amino-acid sequence, 826 residues long: Prominin-1-A (826 aa).

A run of 3 helical transmembrane segments spans residues 50–70 (YYEP…LFVV), 106–126 (VVCA…GLLF), and 153–173 (LLTT…LCAY). N-linked (GlcNAc...) asparagine glycosylation is found at Asn178, Asn268, Asn286, Asn327, Asn388, and Asn404. A run of 2 helical transmembrane segments spans residues 439–459 (CMIV…ILGF) and 483–503 (VGFS…LFLA). Asn576, Asn582, Asn617, and Asn693 each carry an N-linked (GlcNAc...) asparagine glycan.

This sequence belongs to the prominin family.

Its subcellular location is the apical cell membrane. It localises to the cell projection. It is found in the microvillus membrane. The protein resides in the endoplasmic reticulum. The protein localises to the endoplasmic reticulum-Golgi intermediate compartment. May play a role in cell differentiation, proliferation and apoptosis. Binds cholesterol in cholesterol-containing plasma membrane microdomains and may play a role in the organization of the apical plasma membrane in epithelial cells. Involved in regulation of MAPK and Akt signaling pathways. This chain is Prominin-1-A (prom1a), found in Danio rerio (Zebrafish).